A 545-amino-acid chain; its full sequence is Chaperonin GroEL (545 aa).

Residues 30–33, K51, 87–91, G415, and D496 each bind ATP; these read TLGP and DGTTT.

It belongs to the chaperonin (HSP60) family. Forms a cylinder of 14 subunits composed of two heptameric rings stacked back-to-back. Interacts with the co-chaperonin GroES.

The protein resides in the cytoplasm. The catalysed reaction is ATP + H2O + a folded polypeptide = ADP + phosphate + an unfolded polypeptide.. Functionally, together with its co-chaperonin GroES, plays an essential role in assisting protein folding. The GroEL-GroES system forms a nano-cage that allows encapsulation of the non-native substrate proteins and provides a physical environment optimized to promote and accelerate protein folding. In Chlorobaculum tepidum (strain ATCC 49652 / DSM 12025 / NBRC 103806 / TLS) (Chlorobium tepidum), this protein is Chaperonin GroEL.